The chain runs to 119 residues: Large ribosomal subunit protein bL20 (119 aa).

The protein belongs to the bacterial ribosomal protein bL20 family.

Binds directly to 23S ribosomal RNA and is necessary for the in vitro assembly process of the 50S ribosomal subunit. It is not involved in the protein synthesizing functions of that subunit. This is Large ribosomal subunit protein bL20 from Nitrobacter hamburgensis (strain DSM 10229 / NCIMB 13809 / X14).